The primary structure comprises 109 residues: Ribulose bisphosphate carboxylase small subunit (109 aa).

Belongs to the RuBisCO small chain family. Heterohexadecamer of 8 large and 8 small subunits. Forms complexes of many stoichiometries with Raf1 and RbcL.

Its subcellular location is the carboxysome. Functionally, ruBisCO catalyzes two reactions: the carboxylation of D-ribulose 1,5-bisphosphate, the primary event in carbon dioxide fixation, as well as the oxidative fragmentation of the pentose substrate in the photorespiration process. Both reactions occur simultaneously and in competition at the same active site. Although the small subunit is not catalytic it is essential for maximal activity. This Nostoc sp. (strain PCC 7120 / SAG 25.82 / UTEX 2576) protein is Ribulose bisphosphate carboxylase small subunit.